The following is an 84-amino-acid chain: Small ribosomal subunit protein uS17 (84 aa).

The protein belongs to the universal ribosomal protein uS17 family. As to quaternary structure, part of the 30S ribosomal subunit.

In terms of biological role, one of the primary rRNA binding proteins, it binds specifically to the 5'-end of 16S ribosomal RNA. In Legionella pneumophila (strain Paris), this protein is Small ribosomal subunit protein uS17.